A 534-amino-acid polypeptide reads, in one-letter code: Low affinity inorganic phosphate transporter 1 (534 aa).

The Cytoplasmic portion of the chain corresponds to 1-23 (MAKDLQVLTALDVAKTQLYHFTA). A helical transmembrane segment spans residues 24-44 (IVIAGMGFFTDAYDLFCISLV). Over 45–69 (TKLLGRIYYHHEGALKPGSLPPNVA) the chain is Extracellular. The helical transmembrane segment at 70–90 (AAVNGVAFCGTLAGQLFFGWL) threads the bilayer. Residues 91 to 98 (GDKLGRKK) are Cytoplasmic-facing. Residues 99–119 (VYGMTLMLMVICSIASGLSFG) traverse the membrane as a helical segment. At 120 to 124 (HTPKS) the chain is on the extracellular side. The chain crosses the membrane as a helical span at residues 125–145 (VMATLCFFRFWLGFGIGGDYP). The Cytoplasmic portion of the chain corresponds to 146–163 (LSATIMSEYANKKTRGAF). A helical membrane pass occupies residues 164–184 (IAAVFAMQGFGILAGGMVAII). Over 185 to 210 (VSAAFKNQFPAPAYKDGALASTISQA) the chain is Extracellular. The chain crosses the membrane as a helical span at residues 211–231 (DFVWRIIVMFGAIPTALTYYW). Residues 232–290 (RMKMPETARYTALVAKNLKQATNDMSKVLQVEIEPEQEKVEEISQGNDFGLFTKQFLRR) are Cytoplasmic-facing. A helical transmembrane segment spans residues 291–311 (HGLHLLGTASTWFLLDIAFYS). Over 312–343 (QNLFQKDIFSAIGWIPPAETMNALEEVYRIAR) the chain is Extracellular. The chain crosses the membrane as a helical span at residues 344 to 364 (AQTLIALCSTVPGYWFTVAFI). The Cytoplasmic segment spans residues 365–369 (DKIGR). A helical transmembrane segment spans residues 370-390 (FAIQLMGFFFMTVFMFALAIP). Over 391–400 (YTHWTHKDNR) the chain is Extracellular. The helical transmembrane segment at 401–421 (IGFVIMYSLTFFFANFGPNAT) threads the bilayer. Over 422-440 (TFVVPAEIFPARLRSTCHG) the chain is Cytoplasmic. A helical transmembrane segment spans residues 441–461 (ISAAAGKAGAMVGAFGFLYAA). Residues 462–481 (QSTDPKKTDAGYPAGIGVRN) are Extracellular-facing. The helical transmembrane segment at 482–502 (SLIVLGCVNFLGMLFTLLVPE) threads the bilayer. The Cytoplasmic segment spans residues 503 to 534 (SKGKSLEEMSRENEGEDENGTEMRASGRTVPV). The interval 507 to 534 (SLEEMSRENEGEDENGTEMRASGRTVPV) is disordered.

The protein belongs to the major facilitator superfamily. Phosphate:H(+) symporter (TC 2.A.1.9) family.

It is found in the cell membrane. It catalyses the reaction phosphate(in) + H(+)(in) = phosphate(out) + H(+)(out). Low-affinity transporter for external inorganic phosphate (Pi). Involved in phosphorus (P) remobilization from dying to developing tissues during corolla senescence in an ethylene-dependent manner. This chain is Low affinity inorganic phosphate transporter 1, found in Petunia hybrida (Petunia).